A 229-amino-acid polypeptide reads, in one-letter code: Potassium/proton antiporter CemA (229 aa).

3 consecutive transmembrane segments (helical) span residues 6 to 26 (AFIPFFYFLSIVFLPWLISLC), 107 to 127 (ILHFSTNLISFVILSGYSFWG), and 189 to 209 (ILSGLVSTFPVILDTIFKYWI).

This sequence belongs to the CemA family.

The protein localises to the plastid. The protein resides in the chloroplast inner membrane. The catalysed reaction is K(+)(in) + H(+)(out) = K(+)(out) + H(+)(in). Contributes to K(+)/H(+) antiport activity by supporting proton efflux to control proton extrusion and homeostasis in chloroplasts in a light-dependent manner to modulate photosynthesis. Prevents excessive induction of non-photochemical quenching (NPQ) under continuous-light conditions. Indirectly promotes efficient inorganic carbon uptake into chloroplasts. This Arabidopsis thaliana (Mouse-ear cress) protein is Potassium/proton antiporter CemA.